We begin with the raw amino-acid sequence, 350 residues long: Kievitone hydratase (350 aa).

The first 19 residues, 1 to 19 (MMISSVLVAGVVAVSAALA), serve as a signal peptide directing secretion.

In terms of assembly, homodimer. Glycosylated.

The protein localises to the secreted. The catalysed reaction is kievitone hydrate = kievitone + H2O. In terms of biological role, converts fungitoxic kievitone to the less toxic kievitone hydrate, and thereby protects the pathogenic fungus against this phytoalexin. The polypeptide is Kievitone hydratase (khs) (Fusarium solani subsp. phaseoli (Nectria haematococca)).